Consider the following 360-residue polypeptide: Photosystem II protein D1 (360 aa).

3 helical membrane-spanning segments follow: residues 29–46 (YIGWFGCLMFPTLLTATS), 118–133 (HFLLGVASYMGREWEL), and 142–156 (WIFVAFSAPVAAASA). Residue H118 coordinates chlorophyll a. Position 126 (Y126) interacts with pheophytin a. [CaMn4O5] cluster is bound by residues D170 and E189. A helical transmembrane segment spans residues 197–218 (FHMAGVAGVFGGSLFSAMHGSL). H198 lines the chlorophyll a pocket. Residues H215 and 264 to 265 (SF) contribute to the a quinone site. H215 lines the Fe cation pocket. Residue H272 participates in Fe cation binding. The helical transmembrane segment at 274-288 (FLALWPVVGIWLTAM) threads the bilayer. 4 residues coordinate [CaMn4O5] cluster: H332, E333, D342, and A344. The propeptide occupies 345–360 (SGEVLPVALTAPAVNG).

The protein belongs to the reaction center PufL/M/PsbA/D family. PSII is composed of 1 copy each of membrane proteins PsbA, PsbB, PsbC, PsbD, PsbE, PsbF, PsbH, PsbI, PsbJ, PsbK, PsbL, PsbM, PsbT, PsbX, PsbY, PsbZ, Psb30/Ycf12, at least 3 peripheral proteins of the oxygen-evolving complex and a large number of cofactors. It forms dimeric complexes. The D1/D2 heterodimer binds P680, chlorophylls that are the primary electron donor of PSII, and subsequent electron acceptors. It shares a non-heme iron and each subunit binds pheophytin, quinone, additional chlorophylls, carotenoids and lipids. D1 provides most of the ligands for the Mn4-Ca-O5 cluster of the oxygen-evolving complex (OEC). There is also a Cl(-1) ion associated with D1 and D2, which is required for oxygen evolution. The PSII complex binds additional chlorophylls, carotenoids and specific lipids. serves as cofactor. Tyr-161 forms a radical intermediate that is referred to as redox-active TyrZ, YZ or Y-Z. In terms of processing, C-terminally processed by CTPA; processing is essential to allow assembly of the oxygen-evolving complex and thus photosynthetic growth.

Its subcellular location is the plastid. The protein resides in the chloroplast thylakoid membrane. The enzyme catalyses 2 a plastoquinone + 4 hnu + 2 H2O = 2 a plastoquinol + O2. In terms of biological role, photosystem II (PSII) is a light-driven water:plastoquinone oxidoreductase that uses light energy to abstract electrons from H(2)O, generating O(2) and a proton gradient subsequently used for ATP formation. It consists of a core antenna complex that captures photons, and an electron transfer chain that converts photonic excitation into a charge separation. The D1/D2 (PsbA/PsbD) reaction center heterodimer binds P680, the primary electron donor of PSII as well as several subsequent electron acceptors. This chain is Photosystem II protein D1, found in Phaeodactylum tricornutum (strain CCAP 1055/1).